Consider the following 689-residue polypeptide: Histone-lysine N-methyltransferase MEDEA (689 aa).

Disordered regions lie at residues 1 to 20 (MEKE…LNQI), 51 to 73 (HQSF…KSLL), and 169 to 188 (ELSS…EIKK). An interaction with FIE region spans residues 1-109 (MEKENHEDDG…DEDQDYALEE (109 aa)). Acidic residues predominate over residues 171–184 (SSEEDEEDEEEDEE). The SANT domain maps to 339–389 (NNTMWTPVEKDLYLKGIEIFGRNSCDVALNILRGLKTCLEIYNYMREQDQC). In terms of domain architecture, CXC spans 428 to 532 (RYPPALKKTT…TLGETPVQIQ (105 aa)). In terms of domain architecture, SET spans 544–659 (KKILIGKSDV…EGEELFFDYC (116 aa)). The interval 666-689 (DWSRGREPRKTGASKRSKEARPAR) is disordered.

Belongs to the class V-like SAM-binding methyltransferase superfamily. Histone-lysine methyltransferase family. EZ subfamily. In terms of assembly, interacts directly with FIE via its N-terminal domain. These two proteins are probably indirectly associated with FIS2. In plants, PcG complexes are probably composed of a member of the EZ family (CLF or MEA), FIE, and a member of the VEFS family (FIS2, VRN2 or EMF2). Interacts with TAF13. Expressed in unpollinated siliques that contain maturing gametophytes. Not expressed at early stages of floral development during early megagametogenesis.

It localises to the nucleus. It catalyses the reaction L-lysyl(27)-[histone H3] + 3 S-adenosyl-L-methionine = N(6),N(6),N(6)-trimethyl-L-lysyl(27)-[histone H3] + 3 S-adenosyl-L-homocysteine + 3 H(+). Functionally, polycomb group (PcG) protein. Catalytic subunit of some PcG multiprotein complex, which methylates 'Lys-27' of histone H3, leading to transcriptional repression of the affected target genes. Required to prevent the proliferation of the central cell of the female gametophyte by repressing target genes before fertilization. After fertilization, it probably also regulates the embryo and endosperm proliferation and anteroposterior organization during seed development. PcG proteins act by forming multiprotein complexes, which are required to maintain the transcriptionally repressive state of homeotic genes throughout development. PcG proteins are not required to initiate repression, but to maintain it during later stages of development. Interacts with the promoter and repress the transcription of genes such as PHE1 and PHE2, that are paternally active and maternally silenced genes. The polypeptide is Histone-lysine N-methyltransferase MEDEA (MEA) (Arabidopsis thaliana (Mouse-ear cress)).